Reading from the N-terminus, the 331-residue chain is Ornithine carbamoyltransferase (331 aa).

Residues 55–58, Gln-82, Arg-106, and 133–136 contribute to the carbamoyl phosphate site; these read STRT and HPTQ. L-ornithine contacts are provided by residues Asn-166, Asp-230, and 234–235; that span reads SM. Carbamoyl phosphate is bound by residues 272-273 and Arg-317; that span reads CL.

This sequence belongs to the aspartate/ornithine carbamoyltransferase superfamily. OTCase family.

It localises to the cytoplasm. The enzyme catalyses carbamoyl phosphate + L-ornithine = L-citrulline + phosphate + H(+). The protein operates within amino-acid biosynthesis; L-arginine biosynthesis; L-arginine from L-ornithine and carbamoyl phosphate: step 1/3. Reversibly catalyzes the transfer of the carbamoyl group from carbamoyl phosphate (CP) to the N(epsilon) atom of ornithine (ORN) to produce L-citrulline. This Neisseria gonorrhoeae protein is Ornithine carbamoyltransferase (argF).